The chain runs to 442 residues: tRNA modification GTPase MnmE (442 aa).

(6S)-5-formyl-5,6,7,8-tetrahydrofolate contacts are provided by Arg21, Glu79, and Lys118. Positions 215-365 (GLKIAIVGKP…LENKLSSYCN (151 aa)) constitute a TrmE-type G domain. GTP-binding positions include 225–230 (NVGKSS), 244–250 (TNEAGTT), and 269–272 (DTAG). Residues Ser229 and Thr250 each contribute to the Mg(2+) site. Residue Lys442 participates in (6S)-5-formyl-5,6,7,8-tetrahydrofolate binding.

The protein belongs to the TRAFAC class TrmE-Era-EngA-EngB-Septin-like GTPase superfamily. TrmE GTPase family. As to quaternary structure, homodimer. Heterotetramer of two MnmE and two MnmG subunits. K(+) serves as cofactor.

It localises to the cytoplasm. Its function is as follows. Exhibits a very high intrinsic GTPase hydrolysis rate. Involved in the addition of a carboxymethylaminomethyl (cmnm) group at the wobble position (U34) of certain tRNAs, forming tRNA-cmnm(5)s(2)U34. The sequence is that of tRNA modification GTPase MnmE from Mycoplasma mobile (strain ATCC 43663 / 163K / NCTC 11711) (Mesomycoplasma mobile).